The following is a 412-amino-acid chain: Alpha-1-antiproteinase (412 aa).

The signal sequence occupies residues 1 to 24 (MPSSISWGLLLLAGLCCLAPGSLA). Ser-33 carries the post-translational modification Phosphoserine. Asn-65, Asn-102, Asn-165, and Asn-266 each carry an N-linked (GlcNAc...) asparagine glycan. The RCL stretch occupies residues 368–387 (GVTVLEAIPMSLPPDVRFDR). Residue Ser-378 is modified to Phosphoserine.

It belongs to the serpin family. As to quaternary structure, interacts with CELA2A. Interacts with ERGIC3 and LMAN1/ERGIC53. Interacts with PRSS1/Trypsin. In terms of tissue distribution, plasma.

It is found in the secreted. Its function is as follows. Inhibitor of serine proteases. This is Alpha-1-antiproteinase from Callosciurus caniceps (Gray-bellied squirrel).